Here is a 496-residue protein sequence, read N- to C-terminus: MELDLLSAIIILVATYIVSLLINQWRKSKSQQNLPPSPPKLPVIGHLHFLWGGLPQHVFRSIAQKYGPVAHVQLGEVYSVVLSSAEAAKQAMKVLDPNFADRFDGIGSRTMWYDKDDIIFSPYNDHWRQMRRICVTELLSPKNVRSFGYIRQEEIERLIRLLGSSGGAPVDVTEEVSKMSCVVVCRAAFGSVLKDQGSLAELVKESLALASGFELADLYPSSWLLNLLSLNKYRLQRMRRRLDHILDGFLEEHREKKSGEFGGEDIVDVLFRMQKGSDIKIPITSNCIKGFIFDTFSAGAETSSTTISWALSELMRNPAKMAKVQAEVREALKGKTVVDLSEVQELKYLRSVLKETLRLHPPFPLIPRQSREECEVNGYTIPAKTRIFINVWAIGRDPQYWEDPDTFRPERFDEVSRDFMGNDFEFIPFGAGRRICPGLHFGLANVEIPLAQLLYHFDWKLPQGMTDADLDMTETPGLSGPKKKNVCLVPTLYKSP.

Residues 2–22 form a helical; Signal-anchor for type II membrane protein membrane-spanning segment; that stretch reads ELDLLSAIIILVATYIVSLLI. Residue Cys-436 participates in heme binding.

The protein belongs to the cytochrome P450 family. Requires heme as cofactor.

The protein localises to the endoplasmic reticulum membrane. The catalysed reaction is (4S)-limonene + reduced [NADPH--hemoprotein reductase] + O2 = (1S,5R)-carveol + oxidized [NADPH--hemoprotein reductase] + H2O + H(+). Functionally, hydroxylates (-)-(4S)-limonene to (-)-trans-carveol, a precursor of (-)-carvone. Fluorinated substrate analogs are hydroxylated with the same regio- and stereochemistry. This is Cytochrome P450 71D18 (CYP71D18) from Mentha gracilis (Gingermint).